The sequence spans 124 residues: Small ribosomal subunit protein bS6 (124 aa).

A disordered region spans residues 96–124; the sequence is ETAPSPMMKEVQREEARKAAQTTTEGQAA. The span at 115-124 shows a compositional bias: polar residues; sequence AQTTTEGQAA.

Belongs to the bacterial ribosomal protein bS6 family.

Its function is as follows. Binds together with bS18 to 16S ribosomal RNA. The chain is Small ribosomal subunit protein bS6 from Cupriavidus pinatubonensis (strain JMP 134 / LMG 1197) (Cupriavidus necator (strain JMP 134)).